The primary structure comprises 211 residues: Uracil phosphoribosyltransferase (211 aa).

Residues Arg78, Arg103, and 130-138 (DPMLATGGT) contribute to the 5-phospho-alpha-D-ribose 1-diphosphate site. Uracil is bound by residues Ile196 and 201–203 (GDA). Asp202 contributes to the 5-phospho-alpha-D-ribose 1-diphosphate binding site.

Belongs to the UPRTase family. Mg(2+) is required as a cofactor.

The enzyme catalyses UMP + diphosphate = 5-phospho-alpha-D-ribose 1-diphosphate + uracil. Its pathway is pyrimidine metabolism; UMP biosynthesis via salvage pathway; UMP from uracil: step 1/1. With respect to regulation, allosterically activated by GTP. In terms of biological role, catalyzes the conversion of uracil and 5-phospho-alpha-D-ribose 1-diphosphate (PRPP) to UMP and diphosphate. The chain is Uracil phosphoribosyltransferase from Beutenbergia cavernae (strain ATCC BAA-8 / DSM 12333 / CCUG 43141 / JCM 11478 / NBRC 16432 / NCIMB 13614 / HKI 0122).